An 876-amino-acid chain; its full sequence is GRB2-associated and regulator of MAPK protein 1 (876 aa).

The CABIT stretch occupies residues 12–320; sequence KDVKWSSVAV…HLVKGESWPE (309 aa). Y105 and Y453 each carry phosphotyrosine. The segment at 496-572 is disordered; sequence IPGTLGAAVK…SPSPTLSYYS (77 aa). A necessary for interaction with GRB2 region spans residues 498–550; it reads GTLGAAVKSSDTALPPPPVPPKSEAVREECRLLNAPPVPPRSAKPLSTSPSIP. Positions 558-572 are enriched in polar residues; sequence RQQTRSPSPTLSYYS. 2 positions are modified to phosphoserine: S610 and S614. 2 disordered regions span residues 626-664 and 738-763; these read WPNH…PKRN and ASET…PDLS. Polar residues-rich tracts occupy residues 631 to 640 and 648 to 658; these read SGASESQTRS and RSYSYPRQKTP. One can recognise an SAM domain in the interval 811 to 876; it reads LSIEEVSKSL…QFINGWRPKI (66 aa).

It belongs to the GAREM family. Isoform 1 interacts with EGFR. Isoform 1 interacts (via proline-rich domain and phosphorylated at Tyr-105 and Tyr-453) with GRB2 (via SH3 domains); the interaction occurs upon EGF stimulation. Isoform 1 interacts (phosphorylated at Tyr-453) with PTPN11; the interaction increases MAPK/ERK activity and does not affect the GRB2/SOS complex formation. Isoform 2 does not interact with GRB2. On EGF stimulation, phosphorylated on Tyr-105 and Tyr-453. In terms of tissue distribution, isoform 1 is ubiquitously expressed.

Acts as an adapter protein that plays a role in intracellular signaling cascades triggered either by the cell surface activated epidermal growth factor receptor and/or cytoplasmic protein tyrosine kinases. Promotes activation of the MAPK/ERK signaling pathway. Plays a role in the regulation of cell proliferation. The sequence is that of GRB2-associated and regulator of MAPK protein 1 (GAREM1) from Homo sapiens (Human).